The following is a 346-amino-acid chain: Protein RecA (346 aa).

79-86 contributes to the ATP binding site; that stretch reads GPESSGKT.

Belongs to the RecA family.

The protein resides in the cytoplasm. Functionally, can catalyze the hydrolysis of ATP in the presence of single-stranded DNA, the ATP-dependent uptake of single-stranded DNA by duplex DNA, and the ATP-dependent hybridization of homologous single-stranded DNAs. It interacts with LexA causing its activation and leading to its autocatalytic cleavage. The protein is Protein RecA of Chlorobaculum tepidum (strain ATCC 49652 / DSM 12025 / NBRC 103806 / TLS) (Chlorobium tepidum).